The primary structure comprises 725 residues: Eukaryotic translation initiation factor 3 subunit B (725 aa).

The RRM domain maps to 46–130; sequence NCVFIAGIPV…HTFTARSFKD (85 aa). WD repeat units lie at residues 202-240, 242-280, 354-395, 462-504, 510-552, and 554-594; these read RANW…RAHR, AHTN…SLRI, VNIE…SMQR, PLSE…HAPK, DAGV…AKRT, and VIEH…FTFQ.

This sequence belongs to the eIF-3 subunit B family. As to quaternary structure, component of the eukaryotic translation initiation factor 3 (eIF-3) complex.

Its subcellular location is the cytoplasm. In terms of biological role, RNA-binding component of the eukaryotic translation initiation factor 3 (eIF-3) complex, which is involved in protein synthesis of a specialized repertoire of mRNAs and, together with other initiation factors, stimulates binding of mRNA and methionyl-tRNAi to the 40S ribosome. The eIF-3 complex specifically targets and initiates translation of a subset of mRNAs involved in cell proliferation. The protein is Eukaryotic translation initiation factor 3 subunit B of Caenorhabditis elegans.